Here is a 631-residue protein sequence, read N- to C-terminus: MESSILKSPNLSSPSFGVPSIPALSSSSTSPFSSLHLRSQNHRTISLTTAGKFRVSYSLSASSPLPPHAPRRRPNYIPNRISDPNYVRIFDTTLRDGEQSPGATLTSKEKLDIARQLAKLGVDIIEAGFPAASKDDFEAVKTIAETVGNTVDENGYVPVICGLSRCNKKDIETAWEAVKYAKRPRIHTFIATSDIHLKYKLKKSKEEVIEIARNMVRFARSLGCEDVEFSPEDAGRSEREYLYEILGEVIKAGATTLNIPDTVGITLPSEFGQLIADIKANTPGIQNVIISTHCQNDLGLSTANTLSGAHSGARQVEVTINGIGERAGNASLEEVVMAIKCRGDHVLGGLFTGIDTRHIVMTSKMVEEYTGMQTQPHKAIVGANAFAHESGIHQDGMLKHKGTYEIMSPEEIGLERSNDAGIVLGKLSGRHALKDRLNELGYVLDDGQLSNLFWRFKAVAEQKKRVTDADLIALVSDEVFQPEAVWKLLDMQITCGTLGLSTSTVKLADSDGKEHVACSVGTGPVDAAYKAVDLIVKEPATLLEYSMNAVTEGIDAIATTRVLIRGDNNYSSTNAVTGESVERTFSGTGAGMDIVVSSVKAYVGALNKMLGFKEHTSTLSKTPLETNEVPA.

A chloroplast-targeting transit peptide spans 1–46 (MESSILKSPNLSSPSFGVPSIPALSSSSTSPFSSLHLRSQNHRTIS). One can recognise a Pyruvate carboxyltransferase domain in the interval 87–360 (VRIFDTTLRD…FTGIDTRHIV (274 aa)). A divalent metal cation contacts are provided by D96, H293, and N329.

Belongs to the alpha-IPM synthase/homocitrate synthase family. LeuA type 1 subfamily. Homotetramer. The cofactor is Mg(2+). Mn(2+) serves as cofactor. As to expression, expressed in roots, stems, leaves, flowers and siliques.

It is found in the plastid. The protein localises to the chloroplast. The enzyme catalyses 3-methyl-2-oxobutanoate + acetyl-CoA + H2O = (2S)-2-isopropylmalate + CoA + H(+). It participates in amino-acid biosynthesis; L-leucine biosynthesis; L-leucine from 3-methyl-2-oxobutanoate: step 1/4. Its activity is regulated as follows. Feedback inhibition by Leu. Functionally, catalyzes the condensation of the acetyl group of acetyl-CoA with 3-methyl-2-oxobutanoate (2-oxoisovalerate) to form 3-carboxy-3-hydroxy-4-methylpentanoate (2-isopropylmalate). Involved in Leu biosynthesis, but does not participate in the chain elongation of glucosinolates. This is 2-isopropylmalate synthase 2, chloroplastic from Arabidopsis thaliana (Mouse-ear cress).